Consider the following 247-residue polypeptide: Orotidine 5'-phosphate decarboxylase (247 aa).

Residues Asp21, Lys43, 70–79, Thr129, Arg190, Gln199, Gly219, and Arg220 each bind substrate; that span reads DMKFHDIPNT. The active-site Proton donor is the Lys72.

Belongs to the OMP decarboxylase family. Type 1 subfamily. In terms of assembly, homodimer.

It carries out the reaction orotidine 5'-phosphate + H(+) = UMP + CO2. It participates in pyrimidine metabolism; UMP biosynthesis via de novo pathway; UMP from orotate: step 2/2. Catalyzes the decarboxylation of orotidine 5'-monophosphate (OMP) to uridine 5'-monophosphate (UMP). The sequence is that of Orotidine 5'-phosphate decarboxylase from Chromobacterium violaceum (strain ATCC 12472 / DSM 30191 / JCM 1249 / CCUG 213 / NBRC 12614 / NCIMB 9131 / NCTC 9757 / MK).